A 305-amino-acid chain; its full sequence is Aspartate carbamoyltransferase catalytic subunit (305 aa).

Residues Arg51 and Thr52 each contribute to the carbamoyl phosphate site. Lys79 lines the L-aspartate pocket. Residues Arg101, His130, and Gln133 each coordinate carbamoyl phosphate. Arg163 and Arg215 together coordinate L-aspartate. Residues Gly256 and Pro257 each contribute to the carbamoyl phosphate site.

It belongs to the aspartate/ornithine carbamoyltransferase superfamily. ATCase family. As to quaternary structure, heterododecamer (2C3:3R2) of six catalytic PyrB chains organized as two trimers (C3), and six regulatory PyrI chains organized as three dimers (R2).

The enzyme catalyses carbamoyl phosphate + L-aspartate = N-carbamoyl-L-aspartate + phosphate + H(+). It participates in pyrimidine metabolism; UMP biosynthesis via de novo pathway; (S)-dihydroorotate from bicarbonate: step 2/3. Catalyzes the condensation of carbamoyl phosphate and aspartate to form carbamoyl aspartate and inorganic phosphate, the committed step in the de novo pyrimidine nucleotide biosynthesis pathway. The chain is Aspartate carbamoyltransferase catalytic subunit from Ehrlichia canis (strain Jake).